We begin with the raw amino-acid sequence, 108 residues long: Ig kappa chain V-V region HP R16.7 (108 aa).

Residues 1-23 (DIQMTQTTSSLSASLGDRVTISC) are framework-1. A disulfide bridge links Cys23 with Cys88. The complementarity-determining-1 stretch occupies residues 24 to 34 (RASQDISNYLN). The framework-2 stretch occupies residues 35–49 (WYQQKPDGTVKLLIY). Residues 50-56 (YTSRLHS) are complementarity-determining-2. The tract at residues 57–88 (GVPSRFSGSGSGTDYSLTISNLEQEDIATYFC) is framework-3. The segment at 89 to 97 (QQGNSLPRT) is complementarity-determining-3. Residues 98–108 (FGGGTKLEIKR) are framework-4.

This Mus musculus (Mouse) protein is Ig kappa chain V-V region HP R16.7.